The chain runs to 481 residues: Cobyric acid synthase (481 aa).

The region spanning 249 to 436 (GLHIVCLRLS…LHGMFRDDAF (188 aa)) is the GATase cobBQ-type domain. Residue C331 is the Nucleophile of the active site. The active site involves H428.

This sequence belongs to the CobB/CobQ family. CobQ subfamily.

It functions in the pathway cofactor biosynthesis; adenosylcobalamin biosynthesis. In terms of biological role, catalyzes amidations at positions B, D, E, and G on adenosylcobyrinic A,C-diamide. NH(2) groups are provided by glutamine, and one molecule of ATP is hydrogenolyzed for each amidation. This Jannaschia sp. (strain CCS1) protein is Cobyric acid synthase.